Consider the following 559-residue polypeptide: Potassium-transporting ATPase potassium-binding subunit (559 aa).

The next 13 helical transmembrane spans lie at 5–25 (GFLLIASFLLILLVLAKPLGS), 27–47 (LARLIAAVPLPGVAGVERILW), 63–83 (LLALLTLNLLGLGILFCLLFW), 132–152 (GLTVQNFLSAATGIAVVFALI), 170–190 (LVRITLWILFPVALIIALFFI), 253–273 (LAQMLAIFLIPAALCFAFGEA), 283–303 (LLWAMSFIFVVCVAVVMWAEV), 327–347 (FGVLASSLFAVVTTAASCGAV), 356–376 (ALGGMVPMWLMQIGEVVFGGV), 379–399 (GLYGMLLFVLLAVFIAGLMIG), 416–436 (MTALAILVTPMLVLLGSALAM), 484–504 (LLAFCMFVGRFGVIIPVMAIA), and 524–544 (GALFIGLLIGTVLLVGALTFI).

It belongs to the KdpA family. In terms of assembly, the system is composed of three essential subunits: KdpA, KdpB and KdpC.

The protein localises to the cell inner membrane. Its function is as follows. Part of the high-affinity ATP-driven potassium transport (or Kdp) system, which catalyzes the hydrolysis of ATP coupled with the electrogenic transport of potassium into the cytoplasm. This subunit binds the periplasmic potassium ions and delivers the ions to the membrane domain of KdpB through an intramembrane tunnel. In Salmonella choleraesuis (strain SC-B67), this protein is Potassium-transporting ATPase potassium-binding subunit.